A 153-amino-acid polypeptide reads, in one-letter code: MLNQLQSLTEYVGGNNALIDQWLQARKQLLVAYYHLVGIKPNKEALSLLDEEALDNFCQNLVDYLSTGHFHLYEKMLHEAATHSEQVLALSTQLDFALQNNTQQIMTFYDSHLAAAIDHDNCIEFQQALSSVGEALEERFTLEDNMIKQVYDN.

Belongs to the Rsd/AlgQ family. Interacts with RpoD.

It is found in the cytoplasm. Binds RpoD and negatively regulates RpoD-mediated transcription activation by preventing the interaction between the primary sigma factor RpoD with the catalytic core of the RNA polymerase and with promoter DNA. May be involved in replacement of the RNA polymerase sigma subunit from RpoD to RpoS during the transition from exponential growth to the stationary phase. In Pectobacterium atrosepticum (strain SCRI 1043 / ATCC BAA-672) (Erwinia carotovora subsp. atroseptica), this protein is Regulator of sigma D.